The sequence spans 694 residues: Transcription activator of gluconeogenesis Pc22g08580 (694 aa).

The disordered stretch occupies residues 1–61; it reads MNMETKNGSP…DPSRPRRKKA (61 aa). Positions 17-55 are enriched in basic and acidic residues; the sequence is SGERDSADITEHEQMDVKPKTNGDSKADRKAANAKDPSR. The segment at residues 65-93 is a DNA-binding region (zn(2)-C6 fungal-type); that stretch reads CFACQRAHLTCGDERPCQRCIKRGLQDAC. 3 disordered regions span residues 126–240, 276–300, and 552–582; these read TLRN…GPFF, AAGD…AQFS, and TGGS…GTGR. The segment covering 132-141 has biased composition (polar residues); sequence PISRNGTNAV. Low complexity predominate over residues 142–171; sequence NSNQQHSQQHPQQPTNPTNNNFYPTPQTQT. 3 stretches are compositionally biased toward polar residues: residues 172 to 234, 281 to 300, and 552 to 581; these read GSYN…SQNP, PTDS…AQFS, and TGGS…SGTG.

Belongs to the ERT1/acuK family.

It localises to the nucleus. Its function is as follows. Transcription factor which regulates nonfermentable carbon utilization. Activator of gluconeogenetic genes. The protein is Transcription activator of gluconeogenesis Pc22g08580 of Penicillium rubens (strain ATCC 28089 / DSM 1075 / NRRL 1951 / Wisconsin 54-1255) (Penicillium chrysogenum).